Consider the following 277-residue polypeptide: N-acetylmuramic acid 6-phosphate etherase (277 aa).

Positions 53–216 (IIPRVKKGGR…STTIMIELGR (164 aa)) constitute an SIS domain. The active-site Proton donor is the Glu-81. Glu-112 is a catalytic residue.

Belongs to the GCKR-like family. MurNAc-6-P etherase subfamily. As to quaternary structure, homodimer.

It catalyses the reaction N-acetyl-D-muramate 6-phosphate + H2O = N-acetyl-D-glucosamine 6-phosphate + (R)-lactate. Its pathway is amino-sugar metabolism; N-acetylmuramate degradation. Its function is as follows. Specifically catalyzes the cleavage of the D-lactyl ether substituent of MurNAc 6-phosphate, producing GlcNAc 6-phosphate and D-lactate. The polypeptide is N-acetylmuramic acid 6-phosphate etherase (Bacteroides thetaiotaomicron (strain ATCC 29148 / DSM 2079 / JCM 5827 / CCUG 10774 / NCTC 10582 / VPI-5482 / E50)).